Consider the following 137-residue polypeptide: Nucleoside diphosphate kinase (137 aa).

ATP contacts are provided by Lys-10, Phe-58, Arg-86, Thr-92, Arg-103, and Asn-113. His-116 functions as the Pros-phosphohistidine intermediate in the catalytic mechanism.

It belongs to the NDK family. Homotetramer. Requires Mg(2+) as cofactor.

Its subcellular location is the cytoplasm. It carries out the reaction a 2'-deoxyribonucleoside 5'-diphosphate + ATP = a 2'-deoxyribonucleoside 5'-triphosphate + ADP. The enzyme catalyses a ribonucleoside 5'-diphosphate + ATP = a ribonucleoside 5'-triphosphate + ADP. In terms of biological role, major role in the synthesis of nucleoside triphosphates other than ATP. The ATP gamma phosphate is transferred to the NDP beta phosphate via a ping-pong mechanism, using a phosphorylated active-site intermediate. In Helicobacter acinonychis (strain Sheeba), this protein is Nucleoside diphosphate kinase.